The chain runs to 299 residues: Pyridoxal 5'-phosphate synthase subunit PdxS (299 aa).

Residue Asp24 coordinates D-ribose 5-phosphate. The active-site Schiff-base intermediate with D-ribose 5-phosphate is the Lys81. Gly153 contacts D-ribose 5-phosphate. Arg165 is a D-glyceraldehyde 3-phosphate binding site. Residues Gly219 and 240–241 contribute to the D-ribose 5-phosphate site; that span reads GS.

It belongs to the PdxS/SNZ family. In the presence of PdxT, forms a dodecamer of heterodimers.

It catalyses the reaction aldehydo-D-ribose 5-phosphate + D-glyceraldehyde 3-phosphate + L-glutamine = pyridoxal 5'-phosphate + L-glutamate + phosphate + 3 H2O + H(+). It participates in cofactor biosynthesis; pyridoxal 5'-phosphate biosynthesis. Functionally, catalyzes the formation of pyridoxal 5'-phosphate from ribose 5-phosphate (RBP), glyceraldehyde 3-phosphate (G3P) and ammonia. The ammonia is provided by the PdxT subunit. Can also use ribulose 5-phosphate and dihydroxyacetone phosphate as substrates, resulting from enzyme-catalyzed isomerization of RBP and G3P, respectively. The chain is Pyridoxal 5'-phosphate synthase subunit PdxS from Methanococcus maripaludis (strain C5 / ATCC BAA-1333).